Here is a 109-residue protein sequence, read N- to C-terminus: Oncomodulin (109 aa).

N-acetylserine is present on serine 2. EF-hand domains follow at residues 39-74 (MSAS…FQSD) and 78-109 (LTES…MVHS). Ca(2+) contacts are provided by aspartate 52, aspartate 54, serine 56, tyrosine 58, glutamate 63, aspartate 91, aspartate 93, aspartate 95, lysine 97, and glutamate 102.

It belongs to the parvalbumin family. In terms of tissue distribution, found in tumor tissues and not detected in normal tissues.

In terms of biological role, has some calmodulin-like activity with respect to enzyme activation and growth regulation. Binds two calcium ions. This chain is Oncomodulin (Ocm), found in Rattus norvegicus (Rat).